We begin with the raw amino-acid sequence, 325 residues long: HTH-type transcriptional regulator BbuR (325 aa).

The 58-residue stretch at 15–72 folds into the HTH lysR-type domain; that stretch reads LDTDLLNVFCWVAKTQSFSRAAAELGTSQPVITRKIGRLEECLGVALFVRSNRGCVLT. The segment at residues 32–51 is a DNA-binding region (H-T-H motif); sequence FSRAAAELGTSQPVITRKIG.

This sequence belongs to the LysR transcriptional regulatory family.

The protein is HTH-type transcriptional regulator BbuR (bbuR) of Bordetella bronchiseptica (strain ATCC BAA-588 / NCTC 13252 / RB50) (Alcaligenes bronchisepticus).